The chain runs to 298 residues: Palmitoyl-protein thioesterase 1 (298 aa).

An N-terminal signal peptide occupies residues 1 to 16; it reads MRYFPLLLCLLAITTA. N-linked (GlcNAc...) asparagine glycosylation is present at Asn-20. 3 disulfide bridges follow: Cys-37–Cys-38, Cys-88–Cys-120, and Cys-144–Cys-151. The Nucleophile role is filled by Ser-107. The active site involves Asp-224. A glycan (N-linked (GlcNAc...) asparagine) is linked at Asn-250. The active site involves His-280.

The protein belongs to the palmitoyl-protein thioesterase family.

It catalyses the reaction S-hexadecanoyl-L-cysteinyl-[protein] + H2O = L-cysteinyl-[protein] + hexadecanoate + H(+). Removes thioester-linked fatty acyl groups such as palmitate (hexadecanoate) from modified cysteine residues in proteins or peptides. This chain is Palmitoyl-protein thioesterase 1 (ppt-1), found in Caenorhabditis elegans.